We begin with the raw amino-acid sequence, 372 residues long: BTB/POZ and TAZ domain-containing protein 4 (372 aa).

A disordered region spans residues 14–37; that stretch reads SADSSSVPIPPPLPSKSDGLKKKL. In terms of domain architecture, BTB spans 60 to 128; that stretch reads ADVVIYTDNG…LYSSCYEKEE (69 aa). The segment at 238-330 adopts a TAZ-type zinc-finger fold; the sequence is RIYSQLYEAM…SDQCRVPLCR (93 aa). The tract at residues 341–364 is caM-binding; it reads KKDESRWKLLVKNVLGSKKIGGSP.

Interacts with GTE11/BET10 through the BTB domain. Preferentially expressed in leaves, stems and flowers.

It localises to the cytoplasm. It participates in protein modification; protein ubiquitination. Its function is as follows. May act as a substrate-specific adapter of an E3 ubiquitin-protein ligase complex (CUL3-RBX1-BTB) which mediates the ubiquitination and subsequent proteasomal degradation of target proteins. The polypeptide is BTB/POZ and TAZ domain-containing protein 4 (BT4) (Arabidopsis thaliana (Mouse-ear cress)).